Consider the following 1166-residue polypeptide: Reverse gyrase (1166 aa).

An RG N-terminal-type zinc finger spans residues 1-40 (MINVMYKNSCPNCGGDISADRLLNGLPCETCLPYINGIDG). Cysteine 10, cysteine 13, cysteine 28, and cysteine 31 together coordinate Zn(2+). ATP is bound by residues glutamine 92 and 109 to 116 (APTGLGKT). Positions 96-285 (LRRLVSNQSF…ALRLLTGFEP (190 aa)) constitute a Helicase ATP-binding domain. Positions 190 to 193 (DDAD) match the DEAD box motif. The tract at residues 576–1166 (FNISTGLLIV…VNPLKSEQNV (591 aa)) is topoisomerase I. The Toprim domain occupies 580 to 743 (TGLLIVESPT…NIYRITYHEI (164 aa)). Glutamate 586 lines the Mg(2+) pocket. The RG C-terminal-type zinc finger occupies 662 to 689 (IKKCLDCNKTFSIASDKCPYCGSTNVQT). Zn(2+)-binding residues include cysteine 665, cysteine 668, cysteine 679, and cysteine 682. Position 712 (aspartate 712) interacts with Mg(2+). The Topo IA-type catalytic domain occupies 759–1157 (NTNLVMSQIV…EIFSEISTLV (399 aa)). The active-site O-(5'-phospho-DNA)-tyrosine intermediate is tyrosine 903.

This sequence in the N-terminal section; belongs to the DEAD box helicase family. DDVD subfamily. The protein in the C-terminal section; belongs to the type IA topoisomerase family. As to quaternary structure, monomer. The cofactor is Zn(2+). Mg(2+) is required as a cofactor.

It is found in the cytoplasm. It catalyses the reaction ATP + H2O = ADP + phosphate + H(+). With respect to regulation, inhibited by UV light-induced lesions; substrate is completely cleaved but a nicked form accumulates, suggesting the reaction is blocked between the cleavage and ligation steps. Inhibited by actinomycin D; substrate DNA remains negatively supercoiled in this case. Activity is stimulated by SSB from S.solfataricus strain P2. Positive supercoiling is inhibited by Sul7d (also called Sso7d) from S.solfataricus strain MT4; SSB from S.solfataricus strain P2 relieves this inhibition. Functionally, modifies the topological state of DNA by introducing positive supercoils in an ATP-dependent process. Increases the linking number in steps of +1. In vitro requires high concentrations to supercoil negatively supercoiled DNA, relaxes plasmid DNA first; DNA single-strand binding protein (SSB) from S.solfataricus strain P2 stimulates positive supercoiling. SSB stimulates DNA-binding by reverse gyrase, and thus all subsequent steps. Binds to single-stranded DNA, transiently cleaves and then rejoins the ends, introducing a positive supercoil in the process. The scissile phosphodiester is attacked by the catalytic tyrosine of the enzyme, resulting in the formation of a DNA-(5'-phosphotyrosyl)-enzyme intermediate. May be involved in DNA damage response. Probably involved in rewinding DNA strands in regions of the chromosome that have opened up to allow replication, transcription, DNA repair and/or for DNA protection. The polypeptide is Reverse gyrase (Saccharolobus shibatae (strain ATCC 51178 / DSM 5389 / JCM 8931 / NBRC 15437 / B12) (Sulfolobus shibatae)).